We begin with the raw amino-acid sequence, 245 residues long: Tetrahydromethanopterin S-methyltransferase subunit A 1 (245 aa).

Over 1–222 (MADKKPAADN…AGNYSGKVQG (222 aa)) the chain is Cytoplasmic. Position 84 (His-84) interacts with 5-hydroxybenzimidazolylcob(I)amide. A helical membrane pass occupies residues 223-243 (IMIGLIFTLVIGFLLLMAPLL). Residues 244 to 245 (GA) are Extracellular-facing.

The protein belongs to the MtrA family. As to quaternary structure, the complex is composed of 8 subunits; MtrA, MtrB, MtrC, MtrD, MtrE, MtrF, MtrG and MtrH. Requires 5-hydroxybenzimidazolylcob(I)amide as cofactor.

The protein resides in the cell membrane. It carries out the reaction 5-methyl-5,6,7,8-tetrahydromethanopterin + coenzyme M + 2 Na(+)(in) = 5,6,7,8-tetrahydromethanopterin + methyl-coenzyme M + 2 Na(+)(out). It functions in the pathway one-carbon metabolism; methanogenesis from CO(2); methyl-coenzyme M from 5,10-methylene-5,6,7,8-tetrahydromethanopterin: step 2/2. In terms of biological role, part of a complex that catalyzes the formation of methyl-coenzyme M and tetrahydromethanopterin from coenzyme M and methyl-tetrahydromethanopterin. This is an energy-conserving, sodium-ion translocating step. The chain is Tetrahydromethanopterin S-methyltransferase subunit A 1 from Methanobrevibacter ruminantium (strain ATCC 35063 / DSM 1093 / JCM 13430 / OCM 146 / M1) (Methanobacterium ruminantium).